A 254-amino-acid chain; its full sequence is 3-deoxy-manno-octulosonate cytidylyltransferase (254 aa).

This sequence belongs to the KdsB family.

Its subcellular location is the cytoplasm. The enzyme catalyses 3-deoxy-alpha-D-manno-oct-2-ulosonate + CTP = CMP-3-deoxy-beta-D-manno-octulosonate + diphosphate. It functions in the pathway nucleotide-sugar biosynthesis; CMP-3-deoxy-D-manno-octulosonate biosynthesis; CMP-3-deoxy-D-manno-octulosonate from 3-deoxy-D-manno-octulosonate and CTP: step 1/1. It participates in bacterial outer membrane biogenesis; lipopolysaccharide biosynthesis. Its function is as follows. Activates KDO (a required 8-carbon sugar) for incorporation into bacterial lipopolysaccharide in Gram-negative bacteria. This chain is 3-deoxy-manno-octulosonate cytidylyltransferase, found in Pseudomonas fluorescens (strain SBW25).